The primary structure comprises 2346 residues: Acetyl-CoA carboxylase 1 (2346 aa).

Met-1 carries the post-translational modification N-acetylmethionine. A phosphoserine mark is found at Ser-5, Ser-23, Ser-25, Ser-29, Ser-34, Ser-48, Ser-50, and Ser-53. Thr-58 is modified (phosphothreonine). Ser-78 is subject to Phosphoserine. Residue Ser-80 is modified to Phosphoserine; by AMPK. The Biotin carboxylation domain occupies Val-117–Ala-618. The ATP-grasp domain occupies Ser-275–Met-466. Gly-315–Gly-320 is a binding site for ATP. The Mg(2+) site is built by Glu-424, Glu-437, and Asn-439. Mn(2+) is bound by residues Glu-424, Glu-437, and Asn-439. The active site involves Arg-441. Thr-610 carries the post-translational modification Phosphothreonine. The Biotinyl-binding domain occupies Phe-745–Gln-819. Lys-786 carries the N6-biotinyllysine modification. Ser-835, Ser-1201, Ser-1216, and Ser-1218 each carry phosphoserine. A Phosphothreonine modification is found at Thr-1227. 3 positions are modified to phosphoserine: Ser-1259, Ser-1263, and Ser-1273. Lys-1334 carries the post-translational modification N6-acetyllysine. A CoA carboxyltransferase N-terminal domain is found at Pro-1576 to Asn-1914. A carboxyltransferase region spans residues Pro-1576 to Asn-2234. Positions 1823, 2127, and 2129 each coordinate CoA. Residues Pro-1918–Asn-2234 form the CoA carboxyltransferase C-terminal domain. At Thr-2153 the chain carries Phosphothreonine.

As to quaternary structure, monomer, homodimer, and homotetramer. Can form filamentous polymers. Interacts in its inactive phosphorylated form with the BRCT domains of BRCA1 which prevents ACACA dephosphorylation and inhibits lipid synthesis. Interacts with MID1IP1; interaction with MID1IP1 promotes oligomerization and increases its activity. It depends on Mg(2+) as a cofactor. Requires Mn(2+) as cofactor. Biotin serves as cofactor. Post-translationally, phosphorylation on Ser-1263 is required for interaction with BRCA1. In terms of processing, phosphorylation at Ser-80 by AMPK inactivates enzyme activity. The biotin cofactor is covalently attached to the central biotinyl-binding domain and is required for the catalytic activity.

The protein resides in the cytoplasm. It localises to the cytosol. It catalyses the reaction hydrogencarbonate + acetyl-CoA + ATP = malonyl-CoA + ADP + phosphate + H(+). It participates in lipid metabolism; malonyl-CoA biosynthesis; malonyl-CoA from acetyl-CoA: step 1/1. Inhibited by phosphorylation. Citrate promotes oligomerization of the protein into filaments that correspond to the most active form of the carboxylase. Functionally, cytosolic enzyme that catalyzes the carboxylation of acetyl-CoA to malonyl-CoA, the first and rate-limiting step of de novo fatty acid biosynthesis. This is a 2 steps reaction starting with the ATP-dependent carboxylation of the biotin carried by the biotin carboxyl carrier (BCC) domain followed by the transfer of the carboxyl group from carboxylated biotin to acetyl-CoA. This is Acetyl-CoA carboxylase 1 from Bos taurus (Bovine).